The primary structure comprises 211 residues: Pyridoxine/pyridoxamine 5'-phosphate oxidase (211 aa).

Residues 8–11 (RNEY) and Lys66 each bind substrate. Residues 61 to 66 (RVVLLK), 76 to 77 (FT), Lys83, and Gln105 each bind FMN. Positions 123, 127, and 131 each coordinate substrate. FMN-binding positions include 140–141 (QS) and Trp184. A substrate-binding site is contributed by 190–192 (RLH). Residue Arg194 participates in FMN binding.

The protein belongs to the pyridoxamine 5'-phosphate oxidase family. Homodimer. FMN serves as cofactor.

The enzyme catalyses pyridoxamine 5'-phosphate + O2 + H2O = pyridoxal 5'-phosphate + H2O2 + NH4(+). It catalyses the reaction pyridoxine 5'-phosphate + O2 = pyridoxal 5'-phosphate + H2O2. Its pathway is cofactor metabolism; pyridoxal 5'-phosphate salvage; pyridoxal 5'-phosphate from pyridoxamine 5'-phosphate: step 1/1. The protein operates within cofactor metabolism; pyridoxal 5'-phosphate salvage; pyridoxal 5'-phosphate from pyridoxine 5'-phosphate: step 1/1. Functionally, catalyzes the oxidation of either pyridoxine 5'-phosphate (PNP) or pyridoxamine 5'-phosphate (PMP) into pyridoxal 5'-phosphate (PLP). In Mannheimia succiniciproducens (strain KCTC 0769BP / MBEL55E), this protein is Pyridoxine/pyridoxamine 5'-phosphate oxidase.